The primary structure comprises 195 residues: uncharacterized protein (195 aa).

The interval 86-158 is disordered; it reads LPSEGGWTSG…PAPVSGEPPE (73 aa).

This is an uncharacterized protein from Homo sapiens (Human).